A 189-amino-acid chain; its full sequence is Crossover junction endodeoxyribonuclease RuvC (189 aa).

Catalysis depends on residues D11, E71, and D143. Mg(2+) contacts are provided by D11, E71, and D143.

This sequence belongs to the RuvC family. As to quaternary structure, homodimer which binds Holliday junction (HJ) DNA. The HJ becomes 2-fold symmetrical on binding to RuvC with unstacked arms; it has a different conformation from HJ DNA in complex with RuvA. In the full resolvosome a probable DNA-RuvA(4)-RuvB(12)-RuvC(2) complex forms which resolves the HJ. The cofactor is Mg(2+).

The protein resides in the cytoplasm. The enzyme catalyses Endonucleolytic cleavage at a junction such as a reciprocal single-stranded crossover between two homologous DNA duplexes (Holliday junction).. Functionally, the RuvA-RuvB-RuvC complex processes Holliday junction (HJ) DNA during genetic recombination and DNA repair. Endonuclease that resolves HJ intermediates. Cleaves cruciform DNA by making single-stranded nicks across the HJ at symmetrical positions within the homologous arms, yielding a 5'-phosphate and a 3'-hydroxyl group; requires a central core of homology in the junction. The consensus cleavage sequence is 5'-(A/T)TT(C/G)-3'. Cleavage occurs on the 3'-side of the TT dinucleotide at the point of strand exchange. HJ branch migration catalyzed by RuvA-RuvB allows RuvC to scan DNA until it finds its consensus sequence, where it cleaves and resolves the cruciform DNA. The sequence is that of Crossover junction endodeoxyribonuclease RuvC from Methylorubrum populi (strain ATCC BAA-705 / NCIMB 13946 / BJ001) (Methylobacterium populi).